A 370-amino-acid polypeptide reads, in one-letter code: D-alanine--D-alanine ligase (370 aa).

In terms of domain architecture, ATP-grasp spans lysine 144–aspartate 352. Glutamate 177–glutamate 232 contacts ATP. 3 residues coordinate Mg(2+): aspartate 306, glutamate 319, and asparagine 321.

It belongs to the D-alanine--D-alanine ligase family. Mg(2+) is required as a cofactor. It depends on Mn(2+) as a cofactor.

It is found in the cytoplasm. It carries out the reaction 2 D-alanine + ATP = D-alanyl-D-alanine + ADP + phosphate + H(+). It participates in cell wall biogenesis; peptidoglycan biosynthesis. In terms of biological role, cell wall formation. The chain is D-alanine--D-alanine ligase from Listeria monocytogenes serovar 1/2a (strain ATCC BAA-679 / EGD-e).